Reading from the N-terminus, the 278-residue chain is Non-heme chloroperoxidase (278 aa).

Residues 26–264 (PVVLIHGFPL…GAPHGLLWTH (239 aa)) form the AB hydrolase-1 domain. Residues Ser-99, Asp-229, and His-258 contribute to the active site.

Belongs to the AB hydrolase superfamily. Bacterial non-heme haloperoxidase / perhydrolase family. Homodimer.

The protein is Non-heme chloroperoxidase (cpo) of Kitasatospora aureofaciens (Streptomyces aureofaciens).